A 176-amino-acid polypeptide reads, in one-letter code: 3-hydroxydecanoyl-[acyl-carrier-protein] dehydratase (176 aa).

His75 is a catalytic residue.

Belongs to the thioester dehydratase family. FabA subfamily. Homodimer.

The protein localises to the cytoplasm. The enzyme catalyses a (3R)-hydroxyacyl-[ACP] = a (2E)-enoyl-[ACP] + H2O. The catalysed reaction is (3R)-hydroxydecanoyl-[ACP] = (2E)-decenoyl-[ACP] + H2O. It carries out the reaction (2E)-decenoyl-[ACP] = (3Z)-decenoyl-[ACP]. Its pathway is lipid metabolism; fatty acid biosynthesis. Necessary for the introduction of cis unsaturation into fatty acids. Catalyzes the dehydration of (3R)-3-hydroxydecanoyl-ACP to E-(2)-decenoyl-ACP and then its isomerization to Z-(3)-decenoyl-ACP. Can catalyze the dehydratase reaction for beta-hydroxyacyl-ACPs with saturated chain lengths up to 16:0, being most active on intermediate chain length. The chain is 3-hydroxydecanoyl-[acyl-carrier-protein] dehydratase from Actinobacillus pleuropneumoniae serotype 5b (strain L20).